A 330-amino-acid chain; its full sequence is GMP reductase (330 aa).

Cys-180 serves as the catalytic Thioimidate intermediate. 209-232 (LIADGGIRHNGDIAKSVRFGASMV) provides a ligand contact to NADP(+).

Belongs to the IMPDH/GMPR family. GuaC type 2 subfamily.

The catalysed reaction is IMP + NH4(+) + NADP(+) = GMP + NADPH + 2 H(+). Catalyzes the irreversible NADPH-dependent deamination of GMP to IMP. It functions in the conversion of nucleobase, nucleoside and nucleotide derivatives of G to A nucleotides, and in maintaining the intracellular balance of A and G nucleotides. This chain is GMP reductase, found in Lactobacillus delbrueckii subsp. bulgaricus (strain ATCC 11842 / DSM 20081 / BCRC 10696 / JCM 1002 / NBRC 13953 / NCIMB 11778 / NCTC 12712 / WDCM 00102 / Lb 14).